Reading from the N-terminus, the 856-residue chain is MNVIDTDDLEKHTPMMRQYLTMKAEHHDMLLFYRMGDFYELFYDDAKRASELLGISLTARGKSGGDPIPMAGLPYHAVEGYLAKLVQIGQSVAICEQIGDPATSKGPVERKVVRIVTPGTLTDEALLQERQDNLLAAVYQGKIGFGYATLDVSSGRFVIAELDTRESLEAELQRTNPVEILYSEDFGELGLLNGFKGKRRRPEWEFDYDTSIKLLLAQFGTKDLHGFGIADARLSLQAAGCLMQYVKDTQRTALPHINAITRFNQTDSIVLDAATRRNLELTQNLAGGRDNTLAAVLDNTATPMGSRMLQRWIHQPLRDPKHIKARQQAVTELLDTAAHEGLHEQLKALGDIERIMARLALRTARPRDFARLRQALGLLPELQQSLSTLSAPHTTQLRQHLGEFPAEQALLERAIVDNPPMLIRDGGVIREGYNSELDEWRGLSEGASDYLVQLEAREKERTGINTLKVGYNRVHGYYIEVSRLQSSQVPLNYQRRQTLKNMERYITPELKEYEEKVLSSQGKALALEKQLWEQLFDFILPKLHELQDFARAAAELDVLSNFAERAETLGYTCPELSQDIGVQIEAGRHPVVERVSQTPFIANPVTLHNQRRMLIVTGPNMGGKSTYMRQVALITLMAHIGCFVPADRALIGPIDRIFTRIGASDDLASGRSTFMVEMTETANILHNATASSLVLMDEIGRGTSTYDGLSLAWSAAEYLAQQVGAMTLFATHYFELTQLPELMAGVYNVHLDAIEHDDTIAFMHAVQEGAASKSYGLQVAALAGVPNKVIKAAKHKLQQLESRDHQAEGTRTPIQSLLALPEPVENPALTKLSSINPDNLTPKQALDLLYELKRLS.

ATP is bound at residue Gly618–Ser625.

The protein belongs to the DNA mismatch repair MutS family.

This protein is involved in the repair of mismatches in DNA. It is possible that it carries out the mismatch recognition step. This protein has a weak ATPase activity. The polypeptide is DNA mismatch repair protein MutS (Shewanella baltica (strain OS185)).